The following is a 181-amino-acid chain: Large ribosomal subunit protein uL10 (181 aa).

This sequence belongs to the universal ribosomal protein uL10 family. In terms of assembly, part of the ribosomal stalk of the 50S ribosomal subunit. The N-terminus interacts with L11 and the large rRNA to form the base of the stalk. The C-terminus forms an elongated spine to which L12 dimers bind in a sequential fashion forming a multimeric L10(L12)X complex.

Its function is as follows. Forms part of the ribosomal stalk, playing a central role in the interaction of the ribosome with GTP-bound translation factors. This chain is Large ribosomal subunit protein uL10, found in Nostoc sp. (strain PCC 7120 / SAG 25.82 / UTEX 2576).